The following is an 855-amino-acid chain: RE1-silencing transcription factor (855 aa).

A C2H2-type 1 zinc finger spans residues 141–163 (FFCKPCQYQGENEQEFIVHIRTH). Positions 172-199 (NGGDSDEDLSADAGPQTSVPNAESAESN) are disordered. Over residues 186–199 (PQTSVPNAESAESN) the composition is skewed to polar residues. C2H2-type zinc fingers lie at residues 204–226 (IRCERCGYNTNRFDHYMAHLKHH), 236–258 (FKCTICAYTTISQYHWKKHLRNH), 264–286 (FTCSQCSYFSDRKNNYIQHIRTH), 292–314 (FQCIYCEYSSSQKTHLTRHMRTH), 320–343 (FKCDNCSYLAANQHEVTRHARQVH), 349–371 (LSCPYCQYKTADRSNFKKHVELH), and 377–400 (FLCPVCKYAASKKCNLQYHIKSRH). A disordered region spans residues 458-811 (NAVVETEKSS…ETPTEERDAS (354 aa)). 3 stretches are compositionally biased toward basic and acidic residues: residues 462–472 (ETEKSSKKNMD), 481–496 (NEKKSSSKNDPKEKTA), and 504–535 (AVKDTEETQTEDTRVNNKKETKKAVKSAEKAL). The segment covering 548-569 (SSVQQQSDDCEQTQHTPQQNET) has biased composition (polar residues). A compositionally biased stretch (basic and acidic residues) spans 570–580 (QENRPEKENRS). Basic residues predominate over residues 594 to 604 (QTKKPCKKQTK). The span at 628-638 (RKAENPAEPKQ) shows a compositional bias: basic and acidic residues. Residues 639-648 (RIKRTKKKKD) show a composition bias toward basic residues. The segment covering 652-662 (PTTSEANQTNP) has biased composition (polar residues). 2 stretches are compositionally biased toward basic and acidic residues: residues 711-721 (PAVEDVQRPLE) and 799-811 (KLPETPTEERDAS). Residues 818–840 (HTCIFCDRSFALEMDYRKHLNRH) form a C2H2-type 9 zinc finger.

It is found in the nucleus. Its subcellular location is the cytoplasm. Functionally, transcriptional repressor which binds neuron-restrictive silencer element (NRSE) and represses neuronal gene transcription in non-neuronal cells. This chain is RE1-silencing transcription factor (rest), found in Danio rerio (Zebrafish).